The following is a 503-amino-acid chain: Anhydrotetracycline monooxygenase (503 aa).

Belongs to the PheA/TfdB FAD monooxygenase family. It depends on FAD as a cofactor.

It catalyses the reaction anhydrotetracycline + NADPH + O2 + H(+) = 5a,11a-dehydrotetracycline + NADP(+) + H2O. It participates in antibiotic biosynthesis; oxytetracycline biosynthesis. Catalyzes hydroxylation of the anthracycline structure at position C-6 during the biosynthesis of oxytetracyline. This chain is Anhydrotetracycline monooxygenase, found in Streptomyces rimosus.